The following is a 106-amino-acid chain: UPF0145 protein GSU2791 (106 aa).

This sequence belongs to the UPF0145 family.

This Geobacter sulfurreducens (strain ATCC 51573 / DSM 12127 / PCA) protein is UPF0145 protein GSU2791.